The primary structure comprises 166 residues: Large ribosomal subunit protein uL10 (166 aa).

The protein belongs to the universal ribosomal protein uL10 family. Part of the ribosomal stalk of the 50S ribosomal subunit. The N-terminus interacts with L11 and the large rRNA to form the base of the stalk. The C-terminus forms an elongated spine to which L12 dimers bind in a sequential fashion forming a multimeric L10(L12)X complex.

In terms of biological role, forms part of the ribosomal stalk, playing a central role in the interaction of the ribosome with GTP-bound translation factors. This chain is Large ribosomal subunit protein uL10, found in Geobacillus sp. (strain WCH70).